Reading from the N-terminus, the 1930-residue chain is Ankyrin repeat domain-containing protein SAT10 (1930 aa).

ANK repeat units lie at residues 840-872 (FRHT…DLEE), 878-908 (GTWN…GVLN), 920-949 (SGNT…MRGY), 959-989 (QRSS…DYSK), 993-1023 (NGAS…FSNE), 1073-1102 (SGLT…DANG), 1106-1135 (EFEA…TKTE), 1144-1174 (GRTR…QLSH), 1178-1205 (NQRT…ETET), 1206-1235 (GLQE…EINA), 1239-1268 (YGNT…RLDL), 1272-1301 (DNVN…DVNA), 1304-1333 (GGDT…KFIL), 1339-1368 (RFEN…ERDL), 1400-1429 (SGWT…GRAA), 1514-1543 (QNML…SLTP), 1548-1577 (RHGT…MLAD), 1615-1644 (MGRN…NEDL), 1651-1680 (DGWT…KIFD), and 1696-1724 (KTWT…TTSD).

Its pathway is mycotoxin biosynthesis. Its function is as follows. Ankyrin repeat domain-containing protein; part of the satratoxin SC1 cluster involved in the biosynthesis of satratoxins, trichothecene mycotoxins that are associated with human food poisonings. Satratoxins are suggested to be made by products of multiple gene clusters (SC1, SC2 and SC3) that encode 21 proteins in all, including polyketide synthases, acetyltransferases, and other enzymes expected to modify the trichothecene skeleton. SC1 encodes 10 proteins, SAT1 to SAT10. The largest are SAT8, which encodes a putative polyketide synthase (PKS) with a conventional non-reducing architecture, and SAT10, a putative protein containing four ankyrin repeats and thus may be involved in protein scaffolding. The putative short-chain reductase SAT3 may assist the PKS in some capacity. SAT6 contains a secretory lipase domain and acts probably as a trichothecene esterase. SAT5 encodes a putative acetyltransferase, and so, with SAT6, may affect endogenous protection from toxicity. The probable transcription factor SAT9 may regulate the expression of the SC1 cluster. SC2 encodes proteins SAT11 to SAT16, the largest of which encodes the putative reducing PKS SAT13. SAT11 is a cytochrome P450 monooxygenase, while SAT14 and SAT16 are probable acetyltransferases. The SC2 cluster may be regulated by the transcription factor SAT15. SC3 is a small cluster that encodes 5 proteins, SAT17 to SAT21. SAT21 is a putative MFS-type transporter which may have a role in exporting secondary metabolites. The four other proteins putatively encoded in SC3 include the taurine hydroxylase-like protein SAT17, the O-methyltransferase SAT18, the acetyltransferase SAT19, and the Cys6-type zinc finger SAT20, the latter being probably involved in regulation of SC3 expression. The protein is Ankyrin repeat domain-containing protein SAT10 of Stachybotrys chartarum (strain CBS 109288 / IBT 7711) (Toxic black mold).